The sequence spans 382 residues: Galactokinase (382 aa).

34–37 contacts substrate; the sequence is EHTD. 124 to 130 lines the ATP pocket; sequence GAGLSSS. Positions 130 and 162 each coordinate Mg(2+). Catalysis depends on Asp-174, which acts as the Proton acceptor. Tyr-223 contacts substrate.

This sequence belongs to the GHMP kinase family. GalK subfamily.

It is found in the cytoplasm. The enzyme catalyses alpha-D-galactose + ATP = alpha-D-galactose 1-phosphate + ADP + H(+). The protein operates within carbohydrate metabolism; galactose metabolism. Functionally, catalyzes the transfer of the gamma-phosphate of ATP to D-galactose to form alpha-D-galactose-1-phosphate (Gal-1-P). The sequence is that of Galactokinase from Enterobacter sp. (strain 638).